A 348-amino-acid chain; its full sequence is Serpentine receptor class beta-7 (348 aa).

7 helical membrane-spanning segments follow: residues 31–51, 63–83, 107–127, 145–165, 191–211, 241–261, and 280–300; these read QLIM…FQLL, LVGY…EAFI, GNLL…SITF, FLGP…ILLI, MFFI…FLLL, ISVI…TILL, and GAFM…SVYF.

Belongs to the nematode receptor-like protein srb family.

Its subcellular location is the membrane. The sequence is that of Serpentine receptor class beta-7 (srb-7) from Caenorhabditis elegans.